Here is a 250-residue protein sequence, read N- to C-terminus: MSKPQPIAAANWKCNGSQQSLSELIDLFNSTSINHDVQCVVASTFVHLAMTKERLSHPKFVIAAQNAIAKSGAFTGEVSLPILKDFGVNWIVLGHSERRAYYGETNEIVADKVAAAVASGFMVIACIGETLQERESGRTAVVVLTQIAAIAKKLKKADWAKVVIAYEPVWAIGTGKVATPQQAQEAHALIRSWVSSKIGADVAGELRILYGGSVNGKNARTLYQQRDVNGFLVGGASLKPEFVDIIKATQ.

The substrate site is built by asparagine 11 and lysine 13. The active-site Electrophile is the histidine 95. Glutamate 167 (proton acceptor) is an active-site residue.

The protein belongs to the triosephosphate isomerase family. As to quaternary structure, homodimer.

The protein resides in the glycosome. The catalysed reaction is D-glyceraldehyde 3-phosphate = dihydroxyacetone phosphate. Its pathway is carbohydrate biosynthesis; gluconeogenesis. The protein operates within carbohydrate degradation; glycolysis; D-glyceraldehyde 3-phosphate from glycerone phosphate: step 1/1. This is Triosephosphate isomerase, glycosomal from Trypanosoma brucei brucei.